We begin with the raw amino-acid sequence, 205 residues long: MKMIIGRKVGMTRIFKDDKVIPVTVIKAGPCYVVQKKTIDTDGYNAIQIGFEEAKKVNKPMEGVFKKAGVKPLKILKEFRVENPEEFELGQEIKVDIFAEGDKIDITGWSKGRGFAGAMKRWGFRGGPKSHGAKFHRELGSVGQHSEPARIFKGKKMPGQYGNERVTILNSEIVKIDVENNLIAVKGGVPGARGGLVLIRTAKRG.

It belongs to the universal ribosomal protein uL3 family. In terms of assembly, part of the 50S ribosomal subunit. Forms a cluster with proteins L14 and L19.

In terms of biological role, one of the primary rRNA binding proteins, it binds directly near the 3'-end of the 23S rRNA, where it nucleates assembly of the 50S subunit. In Thermosipho africanus (strain TCF52B), this protein is Large ribosomal subunit protein uL3.